We begin with the raw amino-acid sequence, 137 residues long: NADH-ubiquinone oxidoreductase chain 3 (137 aa).

Helical transmembrane passes span 6–26 (LFIL…LIFA), 57–77 (FFIF…TFPF), and 86–106 (IYGL…FVYE).

Belongs to the complex I subunit 3 family.

The protein resides in the mitochondrion membrane. The catalysed reaction is a ubiquinone + NADH + 5 H(+)(in) = a ubiquinol + NAD(+) + 4 H(+)(out). In terms of biological role, core subunit of the mitochondrial membrane respiratory chain NADH dehydrogenase (Complex I) that is believed to belong to the minimal assembly required for catalysis. Complex I functions in the transfer of electrons from NADH to the respiratory chain. The immediate electron acceptor for the enzyme is believed to be ubiquinone. This chain is NADH-ubiquinone oxidoreductase chain 3 (ND3), found in Podospora anserina (strain S / ATCC MYA-4624 / DSM 980 / FGSC 10383) (Pleurage anserina).